Reading from the N-terminus, the 203-residue chain is Glycerol-3-phosphate acyltransferase (203 aa).

4 helical membrane passes run 3 to 23, 75 to 95, 113 to 133, and 156 to 176; these read LASA…AILV, LGLE…GHLF, VILG…LIVA, and LLTG…LIYW.

This sequence belongs to the PlsY family. Probably interacts with PlsX.

The protein resides in the cell inner membrane. The enzyme catalyses an acyl phosphate + sn-glycerol 3-phosphate = a 1-acyl-sn-glycero-3-phosphate + phosphate. It participates in lipid metabolism; phospholipid metabolism. Its function is as follows. Catalyzes the transfer of an acyl group from acyl-phosphate (acyl-PO(4)) to glycerol-3-phosphate (G3P) to form lysophosphatidic acid (LPA). This enzyme utilizes acyl-phosphate as fatty acyl donor, but not acyl-CoA or acyl-ACP. The chain is Glycerol-3-phosphate acyltransferase from Thioalkalivibrio sulfidiphilus (strain HL-EbGR7).